We begin with the raw amino-acid sequence, 322 residues long: Endochitinase CH25 (322 aa).

An N-terminal signal peptide occupies residues 1–20 (MKSCLLLFLIFSFLLSFSLA). The 42-residue stretch at 21 to 62 (EQCGRQAGGALCPNGLCCSEFGWCGDTEAYCKQPGCQSQCGG) folds into the Chitin-binding type-1 domain. 7 disulfide bridges follow: Cys23–Cys38, Cys32–Cys44, Cys37–Cys51, Cys56–Cys60, Cys92–Cys154, Cys166–Cys174, and Cys273–Cys305. Glu136 (proton donor) is an active-site residue.

This sequence belongs to the glycosyl hydrolase 19 family. Chitinase class I subfamily. As to expression, high expression in roots, moderate in floral tissues and low in stems and leaves.

It catalyses the reaction Random endo-hydrolysis of N-acetyl-beta-D-glucosaminide (1-&gt;4)-beta-linkages in chitin and chitodextrins.. This is Endochitinase CH25 from Brassica napus (Rape).